Consider the following 269-residue polypeptide: 2-dehydro-3-deoxyphosphooctonate aldolase (269 aa).

The protein belongs to the KdsA family.

It is found in the cytoplasm. It carries out the reaction D-arabinose 5-phosphate + phosphoenolpyruvate + H2O = 3-deoxy-alpha-D-manno-2-octulosonate-8-phosphate + phosphate. It functions in the pathway carbohydrate biosynthesis; 3-deoxy-D-manno-octulosonate biosynthesis; 3-deoxy-D-manno-octulosonate from D-ribulose 5-phosphate: step 2/3. It participates in bacterial outer membrane biogenesis; lipopolysaccharide biosynthesis. The polypeptide is 2-dehydro-3-deoxyphosphooctonate aldolase (Chlamydia trachomatis serovar L2 (strain ATCC VR-902B / DSM 19102 / 434/Bu)).